The sequence spans 350 residues: Phenylalanine--tRNA ligase alpha subunit (350 aa).

Glu-259 is a binding site for Mg(2+).

The protein belongs to the class-II aminoacyl-tRNA synthetase family. Phe-tRNA synthetase alpha subunit type 1 subfamily. Tetramer of two alpha and two beta subunits. Mg(2+) serves as cofactor.

The protein resides in the cytoplasm. It carries out the reaction tRNA(Phe) + L-phenylalanine + ATP = L-phenylalanyl-tRNA(Phe) + AMP + diphosphate + H(+). The chain is Phenylalanine--tRNA ligase alpha subunit (pheS) from Rickettsia prowazekii (strain Madrid E).